The chain runs to 418 residues: Serine hydroxymethyltransferase (418 aa).

(6S)-5,6,7,8-tetrahydrofolate-binding positions include Leu121 and 125–127 (GHL). The residue at position 230 (Lys230) is an N6-(pyridoxal phosphate)lysine. 355–357 (SPF) contributes to the (6S)-5,6,7,8-tetrahydrofolate binding site.

It belongs to the SHMT family. Homodimer. Pyridoxal 5'-phosphate is required as a cofactor.

The protein localises to the cytoplasm. The enzyme catalyses (6R)-5,10-methylene-5,6,7,8-tetrahydrofolate + glycine + H2O = (6S)-5,6,7,8-tetrahydrofolate + L-serine. The protein operates within one-carbon metabolism; tetrahydrofolate interconversion. It functions in the pathway amino-acid biosynthesis; glycine biosynthesis; glycine from L-serine: step 1/1. Functionally, catalyzes the reversible interconversion of serine and glycine with tetrahydrofolate (THF) serving as the one-carbon carrier. This reaction serves as the major source of one-carbon groups required for the biosynthesis of purines, thymidylate, methionine, and other important biomolecules. Also exhibits THF-independent aldolase activity toward beta-hydroxyamino acids, producing glycine and aldehydes, via a retro-aldol mechanism. This is Serine hydroxymethyltransferase from Methylococcus capsulatus (strain ATCC 33009 / NCIMB 11132 / Bath).